A 601-amino-acid polypeptide reads, in one-letter code: Elongation factor 4 (601 aa).

A tr-type G domain is found at 6–188; it reads QFIRNFSIIA…AITKEIPAPK (183 aa). Residues 18 to 23 and 135 to 138 each bind GTP; these read DHGKST and NKID.

This sequence belongs to the TRAFAC class translation factor GTPase superfamily. Classic translation factor GTPase family. LepA subfamily.

Its subcellular location is the cell inner membrane. The enzyme catalyses GTP + H2O = GDP + phosphate + H(+). Functionally, required for accurate and efficient protein synthesis under certain stress conditions. May act as a fidelity factor of the translation reaction, by catalyzing a one-codon backward translocation of tRNAs on improperly translocated ribosomes. Back-translocation proceeds from a post-translocation (POST) complex to a pre-translocation (PRE) complex, thus giving elongation factor G a second chance to translocate the tRNAs correctly. Binds to ribosomes in a GTP-dependent manner. In Leptospira borgpetersenii serovar Hardjo-bovis (strain JB197), this protein is Elongation factor 4.